The chain runs to 324 residues: Brorin (324 aa).

Residues 1–27 form the signal peptide; the sequence is MPSSSAMAVGALSSSLLVTCCLMVALC. The segment at 37–126 is disordered; the sequence is AQAPEQPGQE…TPQGEPPAAA (90 aa). 2 stretches are compositionally biased toward basic and acidic residues: residues 44–56 and 64–78; these read GQEK…RDSP and RASR…DWKS. Residues 92 to 107 are compositionally biased toward low complexity; it reads KQKQAWAAQGGSAKAA. Residues 114 to 116 carry the Mediates cell adhesion motif; it reads RGD. 2 consecutive VWFC domains span residues 152-211 and 215-273; these read KGCV…PQCK and NYCE…PICK.

As to quaternary structure, peripherally associated with AMPAR complex. AMPAR complex consists of an inner core made of 4 pore-forming GluA/GRIA proteins (GRIA1, GRIA2, GRIA3 and GRIA4) and 4 major auxiliary subunits arranged in a twofold symmetry. One of the two pairs of distinct binding sites is occupied either by CNIH2, CNIH3 or CACNG2, CACNG3. The other harbors CACNG2, CACNG3, CACNG4, CACNG8 or GSG1L. This inner core of AMPAR complex is complemented by outer core constituents binding directly to the GluA/GRIA proteins at sites distinct from the interaction sites of the inner core constituents. Outer core constituents include at least PRRT1, PRRT2, CKAMP44/SHISA9, FRRS1L and NRN1. The proteins of the inner and outer core serve as a platform for other, more peripherally associated AMPAR constituents, including VWC2. Alone or in combination, these auxiliary subunits control the gating and pharmacology of the AMPAR complex and profoundly impact their biogenesis and protein processing. In terms of tissue distribution, predominantly expressed in the brain (at protein level). It is expressed in the neurons but not the glial cells.

It localises to the secreted. The protein resides in the extracellular space. Its subcellular location is the extracellular matrix. It is found in the basement membrane. The protein localises to the synapse. In terms of biological role, BMP antagonist which may play a role in neural development. Promotes cell adhesion. The polypeptide is Brorin (Vwc2) (Mus musculus (Mouse)).